The sequence spans 763 residues: F-box protein SKP2 (763 aa).

An F-box domain is found at 54–100 (KSSLMCLPTKVLLLILRTLDFNTLVTLCQVNSRFYNLITNEFLFQNV). The residue at position 594 (threonine 594) is a Phosphothreonine.

In terms of assembly, interacts with SKP1. Component of the probable SCF(SKP2) complex containing CDC53, SKP1, RBX1 and SKP2. May interact with ribosomes.

The protein resides in the cytoplasm. The protein operates within protein modification; protein ubiquitination. In terms of biological role, substrate recognition component of a SCF (SKP1-CUL1-F-box protein) E3 ubiquitin-protein ligase complex which mediates the ubiquitination and subsequent proteasomal degradation of target proteins. Probably recognizes and binds to phosphorylated target proteins. Regulates protein levels of sulfur metabolism enzymes. The SCF(SKP2) complex may regulate some transcription factors or regulators of cysteine and methionine biosynthesis. This is F-box protein SKP2 (SKP2) from Saccharomyces cerevisiae (strain ATCC 204508 / S288c) (Baker's yeast).